We begin with the raw amino-acid sequence, 533 residues long: AAA-ATPase At5g17740 (533 aa).

A helical membrane pass occupies residues 11 to 27; sequence ASMFSTYASMMGYVMII. Position 252 to 259 (252 to 259) interacts with ATP; sequence GPPGTGKS.

This sequence belongs to the AAA ATPase family. BCS1 subfamily. The cofactor is Mg(2+).

It localises to the membrane. It catalyses the reaction ATP + H2O = ADP + phosphate + H(+). The protein is AAA-ATPase At5g17740 of Arabidopsis thaliana (Mouse-ear cress).